Here is a 517-residue protein sequence, read N- to C-terminus: Maturase K (517 aa).

It belongs to the intron maturase 2 family. MatK subfamily.

The protein localises to the plastid. It localises to the chloroplast. Its function is as follows. Usually encoded in the trnK tRNA gene intron. Probably assists in splicing its own and other chloroplast group II introns. The polypeptide is Maturase K (Palhinhaea cernua (Nodding clubmoss)).